Consider the following 429-residue polypeptide: U3 small nucleolar RNA-associated protein 18 homolog (429 aa).

4 WD repeats span residues 117–156 (RYTR…KKDR), 295–336 (TDDG…NSTN), 345–386 (NLVT…TFKN), and 392–428 (GKVT…HFTD).

The protein belongs to the WD repeat UTP18 family.

It is found in the nucleus. The protein localises to the nucleolus. Involved in nucleolar processing of pre-18S ribosomal RNA. The chain is U3 small nucleolar RNA-associated protein 18 homolog from Caenorhabditis elegans.